We begin with the raw amino-acid sequence, 385 residues long: 3-dehydroquinate synthase (385 aa).

NAD(+) contacts are provided by residues 122-126, 146-147, Lys159, and Lys168; these read GVIGD and TT. The Zn(2+) site is built by Glu201, His264, and His282.

This sequence belongs to the sugar phosphate cyclases superfamily. Dehydroquinate synthase family. Co(2+) is required as a cofactor. Zn(2+) serves as cofactor. The cofactor is NAD(+).

It localises to the cytoplasm. It carries out the reaction 7-phospho-2-dehydro-3-deoxy-D-arabino-heptonate = 3-dehydroquinate + phosphate. It functions in the pathway metabolic intermediate biosynthesis; chorismate biosynthesis; chorismate from D-erythrose 4-phosphate and phosphoenolpyruvate: step 2/7. In terms of biological role, catalyzes the conversion of 3-deoxy-D-arabino-heptulosonate 7-phosphate (DAHP) to dehydroquinate (DHQ). The sequence is that of 3-dehydroquinate synthase from Rhodospirillum rubrum (strain ATCC 11170 / ATH 1.1.1 / DSM 467 / LMG 4362 / NCIMB 8255 / S1).